Consider the following 315-residue polypeptide: Ribosomal RNA small subunit methyltransferase H (315 aa).

Residues 33–35, Asp52, Phe84, Asp106, and Gln113 contribute to the S-adenosyl-L-methionine site; that span reads GGH. Residues 290–315 are disordered; that stretch reads PITASTSELENNNRSHSAKLRVAEKL. Over residues 292–304 the composition is skewed to polar residues; it reads TASTSELENNNRS.

Belongs to the methyltransferase superfamily. RsmH family.

Its subcellular location is the cytoplasm. The catalysed reaction is cytidine(1402) in 16S rRNA + S-adenosyl-L-methionine = N(4)-methylcytidine(1402) in 16S rRNA + S-adenosyl-L-homocysteine + H(+). Specifically methylates the N4 position of cytidine in position 1402 (C1402) of 16S rRNA. The polypeptide is Ribosomal RNA small subunit methyltransferase H (Lactobacillus helveticus (strain DPC 4571)).